A 336-amino-acid chain; its full sequence is MSDTMVKNQAEEDEIVKSLNNVLKIVVTARKCLDDMKPIELPSELVESPLSMLKDVATLIHQYTTKLSVAAKPPITRDALEKYANDMATTITPLIAAVQVFNAEKYGEIIQNRLKMYAERVLFGIEALLRSVSPKPLGYISEDWKTRGRLIDTGILWESCEKIEKLGSEGIVGYMLEEWDNFVSMLEDARSDLEDYKEGDDSNWDDFGSESEDDSKEAHSEEVFRSEEQIQLANSLLQKLNACKILFLSIKKRRIKNEYPNTFLGELFNAAKQTSDSIDDIVAQIQEDDENFENELDNFHRSARNLCKICISSAQEDSFTPWFSKWLENWEIVSQK.

Positions 196–222 (YKEGDDSNWDDFGSESEDDSKEAHSEE) are disordered. Residues 201–215 (DSNWDDFGSESEDDS) show a composition bias toward acidic residues. Ser-211 is modified (phosphoserine).

This is an uncharacterized protein from Schizosaccharomyces pombe (strain 972 / ATCC 24843) (Fission yeast).